Consider the following 1926-residue polypeptide: Rho GTPase-activating protein 21-A (1926 aa).

A disordered region spans residues 1–41; the sequence is MATRRAIVPEQQQEPSSPASEISKNKDGQEQSEMVSPMEEE. Residues 10-22 show a composition bias toward polar residues; sequence EQQQEPSSPASEI. One can recognise a PDZ domain in the interval 77 to 162; the sequence is HTSIKDEENG…TLELSVMPKD (86 aa). Disordered regions lie at residues 211–236, 353–378, 416–487, 571–592, 640–704, and 868–905; these read VEVP…TTQP, PTAQ…QIDW, TDYN…RSES, QPTR…DRSG, FQRK…DSDA, and GKLG…DVFS. 3 stretches are compositionally biased toward polar residues: residues 216–236, 353–372, and 416–429; these read SGTS…TTQP, PTAQ…SPGP, and TDYN…FSGQ. Positions 441 to 451 are enriched in low complexity; it reads QQSVQMRQRSV. Residues 452–466 show a composition bias toward basic and acidic residues; that stretch reads SQERLEDPVLMKEWP. Positions 468–479 are enriched in polar residues; sequence SASQDTLSSAVA. Polar residues predominate over residues 640-669; that stretch reads FQRKTQTESASGFQLDSVKTSMSASSSPPA. A PH domain is found at 906–1019; the sequence is DSNKEGFLYF…WIKAIQENGN (114 aa). Positions 1044 to 1064 are enriched in polar residues; it reads MSSASNKSEQSPKAPRQTLSI. The tract at residues 1044–1107 is disordered; that stretch reads MSSASNKSEQ…SPPKDKGSWR (64 aa). Residues 1083-1105 are compositionally biased toward basic and acidic residues; the sequence is PKQESERRLFSKDDISPPKDKGS. The Rho-GAP domain occupies 1126–1318; it reads VRLDDCPPAH…TLIQKHDWFF (193 aa). Disordered regions lie at residues 1330 to 1381, 1396 to 1416, 1512 to 1540, 1573 to 1598, 1626 to 1658, and 1827 to 1915; these read VHEE…SGKD, ASRK…EDEL, QMEE…PKVV, LDPN…DERS, RQHR…TPRL, and STSE…LSGT. Residues 1512 to 1534 show a composition bias toward polar residues; sequence QMEESMSDSGTMLSNSSQASAQR. 2 stretches are compositionally biased toward polar residues: residues 1639–1653 and 1866–1902; these read VQAN…TEGS and TADI…NNFS.

It localises to the golgi apparatus membrane. It is found in the cell junction. The protein localises to the cytoplasmic vesicle membrane. The protein resides in the cytoplasm. Its subcellular location is the cytoskeleton. In terms of biological role, GTPase-activating protein (GAP) for rhoa and cdc42. This Xenopus laevis (African clawed frog) protein is Rho GTPase-activating protein 21-A (arhgap21-a).